The sequence spans 244 residues: Transcriptional activator protein Anr (244 aa).

Residue 21–149 participates in a nucleoside 3',5'-cyclic phosphate binding; sequence APLCLPLSLN…RVMSREIRDD (129 aa). Residues 159–232 form the HTH crp-type domain; sequence KTADERIATF…GKEVHILDPI (74 aa). A DNA-binding region (H-T-H motif) is located at residues 192–211; it reads RNEIGNYLGLAVETVSRVFT.

Functionally, transcriptional activator of anaerobic gene expression. Regulates the expression of the components of the hydrogen cyanide synthase (HcnABC) in a positive manner. May also act as an iron sensor. This chain is Transcriptional activator protein Anr, found in Pseudomonas protegens (strain DSM 19095 / LMG 27888 / CFBP 6595 / CHA0).